The following is a 156-amino-acid chain: CASP-like protein 5C1 (156 aa).

Topologically, residues 1 to 24 (MENRERAGAGAVGSAGSLGLRVEQ) are cytoplasmic. A helical membrane pass occupies residues 25-45 (AVFSSASLLFMSVGVEFFSYT). A topological domain (extracellular) is located at residue Ala-46. A helical transmembrane segment spans residues 47-67 (FCFLVTIMGLVIPWSCTLAMI). Over 68–81 (DVYSILVGCPLRVP) the chain is Cytoplasmic. The helical transmembrane segment at 82-102 (GVMVIVVIGDWVLAILSLAAA) threads the bilayer. Residues 103 to 132 (SSSAAVIDLLLQFHGSHCSPRFCGRYQLSA) are Extracellular-facing. The chain crosses the membrane as a helical span at residues 133–153 (MMAFLSWFLTAASSLFNLWFI). Residues 154-156 (ASR) lie on the Cytoplasmic side of the membrane.

This sequence belongs to the Casparian strip membrane proteins (CASP) family. In terms of assembly, homodimer and heterodimers.

Its subcellular location is the cell membrane. The sequence is that of CASP-like protein 5C1 from Oryza sativa subsp. indica (Rice).